Here is a 225-residue protein sequence, read N- to C-terminus: Imidazole glycerol phosphate synthase subunit HisH (225 aa).

The 223-residue stretch at 3–225 folds into the Glutamine amidotransferase type-1 domain; that stretch reads TIAIVDYGMG…LYRNFVDWQP (223 aa). The active-site Nucleophile is the C82. Residues H205 and E207 contribute to the active site.

As to quaternary structure, heterodimer of HisH and HisF.

The protein localises to the cytoplasm. The catalysed reaction is 5-[(5-phospho-1-deoxy-D-ribulos-1-ylimino)methylamino]-1-(5-phospho-beta-D-ribosyl)imidazole-4-carboxamide + L-glutamine = D-erythro-1-(imidazol-4-yl)glycerol 3-phosphate + 5-amino-1-(5-phospho-beta-D-ribosyl)imidazole-4-carboxamide + L-glutamate + H(+). It catalyses the reaction L-glutamine + H2O = L-glutamate + NH4(+). It functions in the pathway amino-acid biosynthesis; L-histidine biosynthesis; L-histidine from 5-phospho-alpha-D-ribose 1-diphosphate: step 5/9. In terms of biological role, IGPS catalyzes the conversion of PRFAR and glutamine to IGP, AICAR and glutamate. The HisH subunit catalyzes the hydrolysis of glutamine to glutamate and ammonia as part of the synthesis of IGP and AICAR. The resulting ammonia molecule is channeled to the active site of HisF. The polypeptide is Imidazole glycerol phosphate synthase subunit HisH (Bordetella pertussis (strain Tohama I / ATCC BAA-589 / NCTC 13251)).